The following is a 489-amino-acid chain: Betaine aldehyde dehydrogenase (489 aa).

Residues threonine 26 and aspartate 93 each coordinate K(+). 150 to 152 lines the NAD(+) pocket; sequence GAW. The active-site Charge relay system is lysine 162. 176–179 serves as a coordination point for NAD(+); the sequence is KPSE. Residue valine 180 participates in K(+) binding. 229–232 lines the NAD(+) pocket; that stretch reads GVET. Residue leucine 245 participates in K(+) binding. The active-site Proton acceptor is glutamate 251. The NAD(+) site is built by glycine 253, cysteine 285, and glutamate 386. The Nucleophile role is filled by cysteine 285. Cysteine 285 carries the cysteine sulfenic acid (-SOH) modification. K(+) is bound by residues lysine 456 and glycine 459. Glutamate 463 (charge relay system) is an active-site residue.

Belongs to the aldehyde dehydrogenase family. As to quaternary structure, dimer of dimers. K(+) is required as a cofactor.

It catalyses the reaction betaine aldehyde + NAD(+) + H2O = glycine betaine + NADH + 2 H(+). It functions in the pathway amine and polyamine biosynthesis; betaine biosynthesis via choline pathway; betaine from betaine aldehyde: step 1/1. Functionally, involved in the biosynthesis of the osmoprotectant glycine betaine. Catalyzes the irreversible oxidation of betaine aldehyde to the corresponding acid. The sequence is that of Betaine aldehyde dehydrogenase from Burkholderia ambifaria (strain MC40-6).